Here is a 295-residue protein sequence, read N- to C-terminus: Lipoyl synthase (295 aa).

Residues C34, C39, C45, C60, C64, C67, and S273 each coordinate [4Fe-4S] cluster. Residues 46 to 262 form the Radical SAM core domain; it reads WNKRHATIMV…KRMAYAKGFS (217 aa).

The protein belongs to the radical SAM superfamily. Lipoyl synthase family. The cofactor is [4Fe-4S] cluster.

Its subcellular location is the cytoplasm. It catalyses the reaction [[Fe-S] cluster scaffold protein carrying a second [4Fe-4S](2+) cluster] + N(6)-octanoyl-L-lysyl-[protein] + 2 oxidized [2Fe-2S]-[ferredoxin] + 2 S-adenosyl-L-methionine + 4 H(+) = [[Fe-S] cluster scaffold protein] + N(6)-[(R)-dihydrolipoyl]-L-lysyl-[protein] + 4 Fe(3+) + 2 hydrogen sulfide + 2 5'-deoxyadenosine + 2 L-methionine + 2 reduced [2Fe-2S]-[ferredoxin]. Its pathway is protein modification; protein lipoylation via endogenous pathway; protein N(6)-(lipoyl)lysine from octanoyl-[acyl-carrier-protein]: step 2/2. In terms of biological role, catalyzes the radical-mediated insertion of two sulfur atoms into the C-6 and C-8 positions of the octanoyl moiety bound to the lipoyl domains of lipoate-dependent enzymes, thereby converting the octanoylated domains into lipoylated derivatives. The chain is Lipoyl synthase from Anaplasma phagocytophilum (strain HZ).